The following is a 724-amino-acid chain: Probable dipeptidyl-peptidase 5 (724 aa).

Residues methionine 1–alanine 19 form the signal peptide. 6 N-linked (GlcNAc...) asparagine glycosylation sites follow: asparagine 76, asparagine 97, asparagine 154, asparagine 257, asparagine 383, and asparagine 453. The active-site Charge relay system is serine 563. Asparagine 610 carries an N-linked (GlcNAc...) asparagine glycan. Active-site charge relay system residues include aspartate 646 and histidine 678.

This sequence belongs to the peptidase S9C family.

The protein localises to the secreted. Its function is as follows. Extracellular dipeptidyl-peptidase which removes N-terminal dipeptides sequentially from polypeptides having unsubstituted N-termini. The sequence is that of Probable dipeptidyl-peptidase 5 (dpp5) from Aspergillus clavatus (strain ATCC 1007 / CBS 513.65 / DSM 816 / NCTC 3887 / NRRL 1 / QM 1276 / 107).